The chain runs to 143 residues: Large ribosomal subunit protein uL11 (143 aa).

This sequence belongs to the universal ribosomal protein uL11 family. As to quaternary structure, part of the ribosomal stalk of the 50S ribosomal subunit. Interacts with L10 and the large rRNA to form the base of the stalk. L10 forms an elongated spine to which L12 dimers bind in a sequential fashion forming a multimeric L10(L12)X complex. One or more lysine residues are methylated.

In terms of biological role, forms part of the ribosomal stalk which helps the ribosome interact with GTP-bound translation factors. In Nitrosomonas eutropha (strain DSM 101675 / C91 / Nm57), this protein is Large ribosomal subunit protein uL11.